A 503-amino-acid polypeptide reads, in one-letter code: MGQIVTLIQSIPEVLQEVFNVALIIVSVLCIVKGFVNLMRCGLFQLVTFLILSGRSCDSMMIDRRHNLTHVEFNLTRMFDNLPQSCSKNNTHHYYKGPSNTTWGIELTLTNTSIANETSGNFSNIGSLGYGNISNCDRTREAGHTLKWLLNELHFNVLHVTRHIGARCKTVEGAGVLIQYNLTVGDRGGEVGRHLIASLAQIIGDPKIAWVGKCFNNCSGDTCRLTNCEGGTHYNFLIIQNTTWENHCTYTPMATIRMALQRTAYSSVSRKLLGFFTWDLSDSSGQHVPGGYCLEQWAIIWAGIKCFDNTVMAKCNKDHNEEFCDTMRLFDFNQNAIKTLQLNVENSLNLFKKTINGLISDSLVIRNSLKQLAKIPYCNYTKFWYINDTITGRHSLPQCWLVHNGSYLNETHFKNDWLWESQNLYNEMLMKEYEERQGKTPLALTDICFWSLVFYTITVFLHIVGIPTHRHIIGDGCPKPHRITRNSLCSCGYYKYQRNLTNG.

The N-myristoyl glycine; by host moiety is linked to residue Gly-2. Residues 2–17 (GQIVTLIQSIPEVLQE) lie on the Extracellular side of the membrane. A helical membrane pass occupies residues 18 to 33 (VFNVALIIVSVLCIVK). At 34 to 58 (GFVNLMRCGLFQLVTFLILSGRSCD) the chain is on the cytoplasmic side. Residue Cys-57 coordinates Zn(2+). Topologically, residues 59–446 (SMMIDRRHNL…QGKTPLALTD (388 aa)) are extracellular. Intrachain disulfides connect Cys-86/Cys-248, Cys-293/Cys-306, Cys-315/Cys-324, and Cys-378/Cys-399. Asn-89, Asn-111, Asn-181, and Asn-241 each carry an N-linked (GlcNAc...) asparagine; by host glycan. Residues Asn-379, Asn-387, Asn-404, and Asn-409 are each glycosylated (N-linked (GlcNAc...) asparagine; by host). A helical membrane pass occupies residues 447 to 467 (ICFWSLVFYTITVFLHIVGIP). Over 468–503 (THRHIIGDGCPKPHRITRNSLCSCGYYKYQRNLTNG) the chain is Cytoplasmic. Positions 469, 471, 477, 481, 489, and 491 each coordinate Zn(2+).

This sequence belongs to the arenaviridae GPC protein family. In terms of assembly, interacts with glycoprotein G2. Part of the GP complex (GP-C) together with glycoprotein G1 and glycoprotein G2. The GP-complex interacts with protein Z, which interacts with ribonucleocapsid; these interactions may induce virion budding. Homotrimer; disulfide-linked. In pre-fusion state, G1 homotrimers bind G2 homotrimers via ionic interactions. Part of the GP complex (GP-C) together with glycoprotein G2 and the stable signal peptide. The GP-complex interacts with protein Z, which interacts with ribonucleocapsid; these interactions may induce virion budding. As to quaternary structure, homotrimer. Interacts with the stable signal peptide. In pre-fusion state, G2 homotrimers bind G1 homotrimers via ionic interactions. Part of the GP complex (GP-C) together with glycoprotein G1 and the stable signal peptide. Acidification in the endosome triggers rearrangements, which ultimately leads to a 6 helix bundle formed by the two heptad repeat domains (HR1 and HR2) in post-fusion state. The GP-complex interacts with protein Z, which interacts with ribonucleocapsid; these interactions may induce virion budding. Post-translationally, specific enzymatic cleavages in vivo yield mature proteins. GP-C polyprotein is cleaved in the endoplasmic reticulum by the host protease MBTPS1. Only cleaved glycoprotein is incorporated into virions. In terms of processing, the SSP remains stably associated with the GP complex following cleavage by signal peptidase and plays crucial roles in the trafficking of GP through the secretory pathway. Myristoylation is necessary for GP2-mediated fusion activity.

The protein localises to the virion membrane. It localises to the host endoplasmic reticulum membrane. It is found in the host Golgi apparatus membrane. The protein resides in the host cell membrane. Its function is as follows. Functions as a cleaved signal peptide that is retained as the third component of the GP complex (GP-C). Helps to stabilize the spike complex in its native conformation. The SSP is required for efficient glycoprotein expression, post-translational maturation cleavage of G1 and G2, glycoprotein transport to the cell surface plasma membrane, formation of infectious virus particles, and acid pH-dependent glycoprotein-mediated cell fusion. In terms of biological role, forms the virion spikes together with glycoprotein G2. The glycoprotein spike trimers are connected to the underlying matrix. Interacts with the host receptor leading to virus endocytosis. Forms the virion spikes together with glycoprotein G1. The glycoprotein spike trimers are connected to the underlying matrix. Class I viral fusion protein that directs fusion of viral and host endosomal membranes, leading to delivery of the nucleocapsid into the cytoplasm. Membrane fusion is mediated by irreversible conformational changes induced by acidification. The protein is Pre-glycoprotein polyprotein GP complex of Cavia cutleri (Guinea pig).